The following is a 448-amino-acid chain: Tubulin alpha-5 chain (448 aa).

The MREC motif signature appears at 1–4 (MREC). Residue Gln-11 participates in GTP binding. An N6-acetyllysine modification is found at Lys-40. Positions 71, 140, 144, 145, 179, 206, and 228 each coordinate GTP. Glu-71 is a binding site for Mg(2+). The active site involves Glu-254.

It belongs to the tubulin family. Dimer of alpha and beta chains. A typical microtubule is a hollow water-filled tube with an outer diameter of 25 nm and an inner diameter of 15 nM. Alpha-beta heterodimers associate head-to-tail to form protofilaments running lengthwise along the microtubule wall with the beta-tubulin subunit facing the microtubule plus end conferring a structural polarity. Microtubules usually have 13 protofilaments but different protofilament numbers can be found in some organisms and specialized cells. Requires Mg(2+) as cofactor. Post-translationally, some glutamate residues at the C-terminus are polyglycylated, resulting in polyglycine chains on the gamma-carboxyl group. Glycylation is mainly limited to tubulin incorporated into axonemes (cilia and flagella) whereas glutamylation is prevalent in neuronal cells, centrioles, axonemes, and the mitotic spindle. Both modifications can coexist on the same protein on adjacent residues, and lowering polyglycylation levels increases polyglutamylation, and reciprocally. The precise function of polyglycylation is still unclear. In terms of processing, some glutamate residues at the C-terminus are polyglutamylated, resulting in polyglutamate chains on the gamma-carboxyl group. Polyglutamylation plays a key role in microtubule severing by spastin (SPAST). SPAST preferentially recognizes and acts on microtubules decorated with short polyglutamate tails: severing activity by SPAST increases as the number of glutamates per tubulin rises from one to eight, but decreases beyond this glutamylation threshold. Acetylation of alpha chains at Lys-40 is located inside the microtubule lumen. This modification has been correlated with increased microtubule stability, intracellular transport and ciliary assembly.

It localises to the cytoplasm. It is found in the cytoskeleton. It catalyses the reaction GTP + H2O = GDP + phosphate + H(+). Tubulin is the major constituent of microtubules, a cylinder consisting of laterally associated linear protofilaments composed of alpha- and beta-tubulin heterodimers. Microtubules grow by the addition of GTP-tubulin dimers to the microtubule end, where a stabilizing cap forms. Below the cap, tubulin dimers are in GDP-bound state, owing to GTPase activity of alpha-tubulin. This Gallus gallus (Chicken) protein is Tubulin alpha-5 chain.